A 358-amino-acid polypeptide reads, in one-letter code: Protein Wnt-8 (358 aa).

The signal sequence occupies residues methionine 1 to serine 22. A disulfide bridge connects residues cysteine 55 and cysteine 66. Asparagine 104 carries N-linked (GlcNAc...) asparagine glycosylation. Disulfide bonds link cysteine 105–cysteine 113, cysteine 115–cysteine 133, cysteine 181–cysteine 195, cysteine 183–cysteine 190, cysteine 260–cysteine 298, cysteine 276–cysteine 291, cysteine 295–cysteine 337, cysteine 313–cysteine 328, cysteine 315–cysteine 325, and cysteine 320–cysteine 321. A lipid anchor (O-palmitoleoyl serine) is attached at serine 187. Residues asparagine 263 and asparagine 282 are each glycosylated (N-linked (GlcNAc...) asparagine).

This sequence belongs to the Wnt family. In terms of assembly, homooligomer; disulfide-linked, leading to inactivation. Interacts with the long chain of cer1. In terms of processing, palmitoleoylation is required for efficient binding to frizzled receptors. Depalmitoleoylation leads to Wnt signaling pathway inhibition. Proteolytic processing by tiki1 and tiki2 promotes oxidation and formation of large disulfide-bond oligomers, leading to inactivation of wnt8.

Its subcellular location is the secreted. The protein resides in the extracellular space. It is found in the extracellular matrix. Functionally, ligand for members of the frizzled family of seven transmembrane receptors. Plays a role in ventral mesodermal patterning during embryogenesis. Mimics Nieuwkoop center activity. Causes dorsal mesodermal differentiation of animal cap ectoderm when coexpressed with noggin and nuclear, sequence-specific DNA-binding protein xBra. None of these molecules causes dorsal mesoderm formation when expressed alone. The chain is Protein Wnt-8 (wnt8) from Xenopus laevis (African clawed frog).